Here is an 873-residue protein sequence, read N- to C-terminus: Alanine--tRNA ligase (873 aa).

Zn(2+) contacts are provided by histidine 562, histidine 566, cysteine 663, and histidine 667.

It belongs to the class-II aminoacyl-tRNA synthetase family. Requires Zn(2+) as cofactor.

It localises to the cytoplasm. It carries out the reaction tRNA(Ala) + L-alanine + ATP = L-alanyl-tRNA(Ala) + AMP + diphosphate. Its function is as follows. Catalyzes the attachment of alanine to tRNA(Ala) in a two-step reaction: alanine is first activated by ATP to form Ala-AMP and then transferred to the acceptor end of tRNA(Ala). Also edits incorrectly charged Ser-tRNA(Ala) and Gly-tRNA(Ala) via its editing domain. The chain is Alanine--tRNA ligase from Bordetella avium (strain 197N).